Consider the following 283-residue polypeptide: Homeobox protein BarH-like 2 (283 aa).

Disordered regions lie at residues 107-141 (AAAAAAETPGGEALASSESETEQPTPRQKKPRRSR) and 198-283 (KGGQ…PPLS). Polar residues predominate over residues 122-132 (SSESETEQPTP). The homeobox DNA-binding region spans 139–198 (RSRTIFTELQLMGLEKKFQKQKYLSTPDRLDLAQSLGLTQLQVKTWYQNRRMKWKKMVLK). The segment covering 268–277 (QPQELSEASS) has biased composition (low complexity).

This sequence belongs to the BAR homeobox family. Nervous system, particularly in the telencephalon, spinal cord, and dorsal root ganglia.

It is found in the nucleus. Functionally, transcription factor. Binds optimally to the DNA consensus sequence 5'-YYTAATGRTTTTY-3'. May control the expression of neural adhesion molecules such as L1 or Ng-CAM during embryonic development of both the central and peripherical nervous system. May be involved in controlling adhesive processes in keratinizing epithelia. The polypeptide is Homeobox protein BarH-like 2 (Barx2) (Mus musculus (Mouse)).